The chain runs to 573 residues: Sterol esterase 1 (573 aa).

Residues 1-12 (MGVSAVLKRARN) are Cytoplasmic-facing. The stretch at 13–33 (LLATFIVCCFMAVVLVLALAH) is an intramembrane region. At 34 to 573 (HFINEHRDTR…TELEMVAEKA (540 aa)) the chain is on the cytoplasmic side. Serine 315 (nucleophile) is an active-site residue. Residues aspartate 489 and histidine 520 each act as charge relay system in the active site.

The protein belongs to the AB hydrolase superfamily. Not N-glycosylated.

Its subcellular location is the lipid droplet. It is found in the membrane. The catalysed reaction is a sterol ester + H2O = a sterol + a fatty acid + H(+). Mediates the hydrolysis of steryl esters, thereby playing a central role in lipid metabolism. Under heme-deficient conditions, it constitutes the major steryl ester hydrolase, suggesting that it plays a central role in mobilization of steryl esters under anaerobic conditions. The protein is Sterol esterase 1 (YEH1) of Saccharomyces cerevisiae (strain ATCC 204508 / S288c) (Baker's yeast).